A 167-amino-acid polypeptide reads, in one-letter code: Transcription factor 24 (167 aa).

A compositionally biased stretch (low complexity) spans 1-23 (MDRGRPAGSPLSASAEPAPLAAA). Positions 1-60 (MDRGRPAGSPLSASAEPAPLAAAIRDSRPGRTGPGPAGPGGGSRSGSGRPAAANAARERS) are disordered. The segment covering 32–45 (TGPGPAGPGGGSRS) has biased composition (gly residues). Residues 46–55 (GSGRPAAANA) are compositionally biased toward low complexity. A bHLH domain is found at 49–101 (RPAAANAARERSRVQTLRHAFLELQRTLPSVPPDTKLSKLDVLLLATTYIAHL).

Efficient DNA binding requires dimerization with another bHLH protein.

Its subcellular location is the nucleus. Its function is as follows. Putative transcription factor. The chain is Transcription factor 24 (TCF24) from Homo sapiens (Human).